Consider the following 338-residue polypeptide: MKRMIALDGAQGEGGGQILRSALSLSMITGQPFTITSIRAGRAKPGLLRQHLTAVKAAAEICRATVEGAELGSQRLVFRLGTVRGGEYRFAIGSAGSCTLVLQTVLPALWFADGPSRVEVSGGTDNPSAPPADFIRRVLEPLLAKIGIHQQTTLLRHGFYPAGGGVVATEVSPVASFNTLQLGERGNIVQMRGEVLLAGVPRHVAEREIATLAGSFSLHEQNIHNLPRDQGPGNTVSLEVESENITERFFVVGEKRVSAEVVAAQLVKEVKRYLASPAVVGEYLADQLVLPMALAGAGEFTVAHPSCHLLTNIAVVERFLPVRFGLIETDGVTRVSIE.

ATP contacts are provided by residues Gln-103 and Tyr-283–Gln-287. His-308 serves as the catalytic Tele-AMP-histidine intermediate.

The protein belongs to the RNA 3'-terminal cyclase family. Type 1 subfamily.

Its subcellular location is the cytoplasm. It carries out the reaction a 3'-end 3'-phospho-ribonucleotide-RNA + ATP = a 3'-end 2',3'-cyclophospho-ribonucleotide-RNA + AMP + diphosphate. Catalyzes the conversion of 3'-phosphate to a 2',3'-cyclic phosphodiester at the end of RNA. The mechanism of action of the enzyme occurs in 3 steps: (A) adenylation of the enzyme by ATP; (B) transfer of adenylate to an RNA-N3'P to produce RNA-N3'PP5'A; (C) and attack of the adjacent 2'-hydroxyl on the 3'-phosphorus in the diester linkage to produce the cyclic end product. The biological role of this enzyme is unknown but it is likely to function in some aspects of cellular RNA processing. The chain is RNA 3'-terminal phosphate cyclase from Shigella sonnei (strain Ss046).